Consider the following 289-residue polypeptide: MTINLTKFSLTILVALTLTACGSSGGSGDSQSAHTPSTSIHTQNNSTPNKNTSTPPVNVSNANNLEIKNNDKTGGAFIISGEDGHVTLKKVDITTNSDLNVLYIDGTKIPLSSPSIKSNGWLNIRSGTGKVSIDGIETSRDLKVCCGKYTDTRIGKVLSKNKNEDTYFFYNGNLTRNMPVGGTVNYNTGDSILSSYHDELGDTDEAVGTSQFSADFVNKKLTGSLSVNEKKLNINADISGNTFSGTTQSDAFKSQGIAEGKFYGENAKELGGLVKANDNSWSGAFAAKK.

The segment at 25–66 (GGSGDSQSAHTPSTSIHTQNNSTPNKNTSTPPVNVSNANNLE) is disordered. Over residues 33 to 43 (AHTPSTSIHTQ) the composition is skewed to polar residues. Low complexity predominate over residues 44–59 (NNSTPNKNTSTPPVNV).

This is an uncharacterized protein from Haemophilus influenzae (strain ATCC 51907 / DSM 11121 / KW20 / Rd).